The following is a 368-amino-acid chain: Forkhead box protein I2 (368 aa).

The tract at residues 33–54 is disordered; it reads QNQQLPQRPAAPPALGYGRNEY. Positions 124 to 218 form a DNA-binding region, fork-head; the sequence is RPPYSYSSLI…DNGNFRRKRK (95 aa). The interval 243-272 is disordered; sequence SLGSDSPRGASALEQSSYGTPESKSRPAGG. The segment covering 255–264 has biased composition (polar residues); sequence LEQSSYGTPE.

The protein resides in the nucleus. Functionally, possible transcriptional activator. The polypeptide is Forkhead box protein I2 (Xenopus tropicalis (Western clawed frog)).